Here is a 162-residue protein sequence, read N- to C-terminus: Retinoic acid receptor responder protein 2 (162 aa).

Positions 1–20 are cleaved as a signal peptide; the sequence is MWQLLLPLALGLGTMGLGRA. Disulfide bonds link Cys-77–Cys-87, Cys-98–Cys-117, and Cys-101–Cys-135. Residues 156–162 constitute a propeptide that is removed on maturation; that stretch reads FIKALSP.

Secreted in an inactive precursor form, prochemerin, which is proteolytically processed by a variety of extracellular proteases to generate forms with differing levels of bioactivity. For example, the removal of five amino acids results in chemerin-157, which exhibits the highest activity, while removal of six amino acids results in chemerin-156 which has slightly less activity. Some proteases are able to cleave at more than one site and chemerin forms may be sequentially processed by different enzymes to modulate activity levels. The coordinated expression and activity of chemerin-modifying enzymes is essential for regulating its bioactivation, inactivation and, consequently, biological function. Cathepsin G cleaves six C-terminal amino acids from prochemerin (chemerin-156), elastase is able to cleave five (chemerin-157), seven (chemerin-155) or ten (chemerin-152), plasmin cleaves four amino acids (chemerin-158), and tryptase cleaves four (chemerin-158) or seven (chemerin-155). Multiple cleavages might be required to fully activate chemerin, with an initial tryptase cleavage resulting in chemerin with low activity (chemerin-158), and a second cleavage by carboxypeptidase N or B producing highly active chemerin (chemerin-157).

It localises to the secreted. Functionally, adipocyte-secreted protein (adipokine) that regulates adipogenesis, metabolism and inflammation through activation of the chemokine-like receptor 1 (CMKLR1). Also acts as a ligand for CMKLR2. Can also bind to C-C chemokine receptor-like 2 (CCRL2), but with a lower affinity than it does to CMKLR1 or CMKLR2. Positively regulates adipocyte differentiation, modulates the expression of adipocyte genes involved in lipid and glucose metabolism and might play a role in angiogenesis, a process essential for the expansion of white adipose tissue. Also acts as a pro-inflammatory adipokine, causing an increase in secretion of pro-inflammatory and prodiabetic adipokines, which further impair adipose tissue metabolic function and have negative systemic effects including impaired insulin sensitivity, altered glucose and lipid metabolism, and a decrease in vascular function in other tissues. Can have both pro- and anti-inflammatory properties depending on the modality of enzymatic cleavage by different classes of proteases. Acts as a chemotactic factor for leukocyte populations expressing CMKLR1, particularly immature plasmacytoid dendritic cells, but also immature myeloid DCs, macrophages and natural killer cells. Exerts an anti-inflammatory role by preventing TNF/TNFA-induced VCAM1 expression and monocytes adhesion in vascular endothelial cells. The effect is mediated via inhibiting activation of NF-kappa-B and CRK/p38 through stimulation of AKT1/NOS3 signaling and nitric oxide production. Exhibits an antimicrobial function in the skin. This chain is Retinoic acid receptor responder protein 2 (RARRES2), found in Bos taurus (Bovine).